Here is a 197-residue protein sequence, read N- to C-terminus: Putative mediator of RNA polymerase II transcription subunit 9 (197 aa).

A coiled-coil region spans residues 83–117 (GINRSLENQEELLKTYKQTLKKKVELLEKLKKLEI). Polar residues predominate over residues 126 to 144 (STSSQSPQIQSKLELQTEL). Positions 126–197 (STSSQSPQIQ…KETTEDIMKE (72 aa)) are disordered. Low complexity predominate over residues 145–182 (SQTEPSQTEPSQTEPSQTEPSQTESSQIESSQIESSQT). Over residues 183–197 (ETEKSKETTEDIMKE) the composition is skewed to basic and acidic residues.

Belongs to the Mediator complex subunit 9 family. In terms of assembly, component of the Mediator complex.

It is found in the nucleus. Component of the Mediator complex, a coactivator involved in the regulated transcription of nearly all RNA polymerase II-dependent genes. Mediator functions as a bridge to convey information from gene-specific regulatory proteins to the basal RNA polymerase II transcription machinery. Mediator is recruited to promoters by direct interactions with regulatory proteins and serves as a scaffold for the assembly of a functional preinitiation complex with RNA polymerase II and the general transcription factors. The protein is Putative mediator of RNA polymerase II transcription subunit 9 (med9) of Dictyostelium discoideum (Social amoeba).